We begin with the raw amino-acid sequence, 31 residues long: Cytochrome b6-f complex subunit 6 (31 aa).

Residues 4-26 (ITSYFGFLLAASTITPALLIGLN) form a helical membrane-spanning segment.

This sequence belongs to the PetL family. In terms of assembly, the 4 large subunits of the cytochrome b6-f complex are cytochrome b6, subunit IV (17 kDa polypeptide, PetD), cytochrome f and the Rieske protein, while the 4 small subunits are PetG, PetL, PetM and PetN. The complex functions as a dimer.

The protein localises to the plastid. The protein resides in the chloroplast thylakoid membrane. Component of the cytochrome b6-f complex, which mediates electron transfer between photosystem II (PSII) and photosystem I (PSI), cyclic electron flow around PSI, and state transitions. PetL is important for photoautotrophic growth as well as for electron transfer efficiency and stability of the cytochrome b6-f complex. The sequence is that of Cytochrome b6-f complex subunit 6 from Calycanthus floridus var. glaucus (Eastern sweetshrub).